A 351-amino-acid chain; its full sequence is Flagellar P-ring protein (351 aa).

The signal sequence occupies residues 1-20; that stretch reads MKKILFLFTASLLLHVTLQA.

It belongs to the FlgI family. As to quaternary structure, the basal body constitutes a major portion of the flagellar organelle and consists of four rings (L,P,S, and M) mounted on a central rod.

It is found in the periplasm. It localises to the bacterial flagellum basal body. Its function is as follows. Assembles around the rod to form the L-ring and probably protects the motor/basal body from shearing forces during rotation. This is Flagellar P-ring protein from Sulfurimonas denitrificans (strain ATCC 33889 / DSM 1251) (Thiomicrospira denitrificans (strain ATCC 33889 / DSM 1251)).